Reading from the N-terminus, the 204-residue chain is MSQETYELKAEARERVGKGSARELRRNGLIPAVIYGDKQAPIAIAINTNEVTKRIHAGGFMTTVATIEVDGKKHKVLPKDYQLDPVRDFTLHVDFLRVSGNTQVTVEIPVHFINEAKSPGLKVGGVLNIVRHEVEVHCPADAIPEFFNIDLSGKKIGDSIHISEVTLPKSVTPVIDRDFTIATIVAPAGGVDESAAEAEGEAEA.

Belongs to the bacterial ribosomal protein bL25 family. CTC subfamily. As to quaternary structure, part of the 50S ribosomal subunit; part of the 5S rRNA/L5/L18/L25 subcomplex. Contacts the 5S rRNA. Binds to the 5S rRNA independently of L5 and L18.

In terms of biological role, this is one of the proteins that binds to the 5S RNA in the ribosome where it forms part of the central protuberance. The chain is Large ribosomal subunit protein bL25 from Rhizobium etli (strain ATCC 51251 / DSM 11541 / JCM 21823 / NBRC 15573 / CFN 42).